The sequence spans 403 residues: Transcription factor E2F1 (403 aa).

The interval 44-85 (ATPQPSRPGPAPRRPALGRPPVKRKLNLETDHQYIAESLPAA) is cyclin A/CDK2 binding. The disordered stretch occupies residues 45 to 64 (TPQPSRPGPAPRRPALGRPP). Residues 87–171 (GRARIPGRGA…KNNIQWLGSQ (85 aa)) mediate DNA binding. The segment at 130 to 151 (LNWAAEVLKVQKRRIYDITNVL) is leucine-zipper. Positions 135 to 171 (EVLKVQKRRIYDITNVLEGIQLITKKSKNNIQWLGSQ) match the DEF box motif. The tract at residues 172 to 261 (VAAGASSRQR…VSDPGEAFQV (90 aa)) is dimerization. A transactivation region spans residues 335–403 (PTEDVSLSPL…DFGDFTHLDF (69 aa)). Residues 375 to 392 (QDYHFGLEEGEGISELFD) are retinoblastoma protein RB1 binding.

It belongs to the E2F/DP family. As to quaternary structure, component of the DRTF1/E2F transcription factor complex. Forms heterodimers with DP family members. The E2F1 complex binds specifically hypophosphorylated RB1, the interaction represses E2F1-driven transcription. During the cell cycle, RB1 becomes phosphorylated in mid-to-late G1 phase, detaches from the DRTF1/E2F complex, rendering E2F transcriptionally active. Viral oncoproteins, notably E1A, T-antigen and HPV E7, are capable of sequestering RB1, thus releasing the active complex.

The protein localises to the nucleus. Functionally, transcription activator that binds DNA cooperatively with DP proteins through the E2 recognition site, 5'-TTTC[CG]CGC-3' found in the promoter region of a number of genes whose products are involved in cell cycle regulation or in DNA replication. The DRTF1/E2F complex functions in the control of cell-cycle progression from G1 to S phase. E2F1 binds preferentially RB1 in a cell-cycle dependent manner. It can mediate both cell proliferation and TP53/p53-dependent apoptosis. Blocks adipocyte differentiation by binding to specific promoters repressing CEBPA binding to its target gene promoters. Positively regulates transcription of RRP1B. The chain is Transcription factor E2F1 from Gallus gallus (Chicken).